A 961-amino-acid polypeptide reads, in one-letter code: E3 ubiquitin-protein ligase TRIM37 (961 aa).

An N-acetylmethionine modification is found at Met-1. The segment at 15 to 55 adopts an RING-type; degenerate zinc-finger fold; it reads CFICMEKLRDARLCPHCSKLCCFSCIRRWLTEQRAQCPHCR. The B box-type zinc-finger motif lies at 90–132; sequence NEKDKCENHHEKLSVFCWTCKKCICHQCALWGGMHGGHTFKPL. Residues Cys-95, His-98, Cys-117, and His-124 each coordinate Zn(2+). Positions 132–234 form a coiled coil; sequence LAEIYEQHVT…VEHQLRSCSK (103 aa). One can recognise an MATH domain in the interval 276-403; sequence YDSATFVLEN…NDTVILRFQV (128 aa). The stretch at 419–450 forms a coiled coil; sequence ITQLEAAQTGYIQQINNLKERLTIELSRTQKS. 5 disordered regions span residues 447 to 514, 529 to 561, 645 to 665, 776 to 811, and 874 to 961; these read TQKS…HHEL, VNHLDGSSSSASSTATSNTEENDIDEETMSGEN, SLLQPTASYSRKDKDQRKQQA, AVDSGENSRSKGDCQVLAEGSSGSSQSGSRHSSPRA, and LESH…GGGR. Ser-454 carries the post-translational modification Phosphoserine. Residues 504 to 514 are compositionally biased toward basic and acidic residues; sequence KIQNEDYHHEL. Over residues 535-545 the composition is skewed to low complexity; the sequence is SSSSASSTATS. Positions 548–561 are enriched in acidic residues; that stretch reads EENDIDEETMSGEN. Positions 776-787 are enriched in basic and acidic residues; it reads AVDSGENSRSKG. The span at 795–806 shows a compositional bias: low complexity; it reads GSSGSSQSGSRH. Acidic residues predominate over residues 903 to 915; that stretch reads SDIECDTENEEQE.

This sequence belongs to the TRIM/RBCC family. In terms of assembly, associates with the PRC2/EED-EZH2 complex. Auto-ubiquitinated. In terms of tissue distribution, highly expressed in testis and brain. In embryonic tissues, expressed in epithelia, including ducts of the developing pancreas, epithelium of the midgut and nasal epithelium. In adult, detected in the central and peripheral nervous systems, including enteric ganglia, retina and the adrenal medulla (at protein level).

The protein resides in the chromosome. The protein localises to the cytoplasm. It is found in the perinuclear region. Its subcellular location is the peroxisome membrane. The enzyme catalyses S-ubiquitinyl-[E2 ubiquitin-conjugating enzyme]-L-cysteine + [acceptor protein]-L-lysine = [E2 ubiquitin-conjugating enzyme]-L-cysteine + N(6)-ubiquitinyl-[acceptor protein]-L-lysine.. It functions in the pathway protein modification; protein ubiquitination. Functionally, E3 ubiquitin-protein ligase required to prevent centriole reduplication. Probably acts by ubiquitinating positive regulators of centriole reduplication. Mediates monoubiquitination of 'Lys-119' of histone H2A (H2AK119Ub), a specific tag for epigenetic transcriptional repression: associates with some Polycomb group (PcG) multiprotein PRC2-like complex and mediates repression of target genes. Also acts as a positive regulator of peroxisome import by mediating monoubiquitination of PEX5 at 'Lys-472': monoubiquitination promotes PEX5 stabilitation by preventing its polyubiquitination and degradation by the proteasome. This is E3 ubiquitin-protein ligase TRIM37 from Mus musculus (Mouse).